Consider the following 109-residue polypeptide: Cell division suppressor protein YneA (109 aa).

The region spanning 39–90 (SEVNVNEGDSLWALADQYAGKSDMAKADFVSWVEKENNLSDGHVEAGDSVVI) is the LysM domain.

Belongs to the YneA family.

It is found in the cytoplasm. Inhibits cell division during the SOS response. Affects a later stage of the cell division protein assembly, after the assembly of the Z ring, by probably suppressing recruitment of FtsL and/or DivIC to the division machinery. This Listeria monocytogenes serovar 1/2a (strain ATCC BAA-679 / EGD-e) protein is Cell division suppressor protein YneA.